A 381-amino-acid chain; its full sequence is Short-chain dehydrogenase anuD (381 aa).

6 residues coordinate NADP(+): Ile-84, Lys-109, Asp-133, Asn-158, Tyr-244, and Lys-248. Residue Tyr-244 is the Proton acceptor of the active site. Tyr-244 (proton donor) is an active-site residue. Lys-248 (lowers pKa of active site Tyr) is an active-site residue.

This sequence belongs to the short-chain dehydrogenases/reductases (SDR) family.

Functionally, highly reducing polyketide synthase; part of the gene cluster that mediates the biosynthesis of annullatin D, an alkylated aromatic polyketide with a fused dihydrobenzofuran lactone ring system that exhibits potent agonistic activities toward the cannabinoid receptors. AnuD does not seem to play a role within the pathway. The annullatin backbone 2-hydroxymethyl-3-pentylphenol is assembled from one acetyl-CoA starter unit and 5 malonyl-CoA elongation units by cooperation of the highly reducing polyketide synthase anuA, the short-chain dehydrogenase anuB and the oxidoreductase anuC, before being hydroxylated at the C-5 alkyl chain by the cytochrome P450 monooxygenase anuE to form (8S)-annullatin E. The prenyltransferase anuH subsequently installs one isoprenyl group at the benzene ring to form (8S)-annullatin J. Enzymatic or nonenzymatic dihydro-benzofuran ring formation between the prenyl and the phenolic hydroxyl groups in (8S)-annullatin J results in two diastereomers (2S,9S)-annullatin H and compound 12. The intermediate (2S,9S)-annullatin H is then converted to (2S,9S)-annullatin D by the FAD-linked oxidoreductase anuG-catalyzed five-member lactone ring formation. The isomer 12 acts as a substrate for the short-chain dehydrogenase anuF and is oxidized to (2R)-annullatin F, which is subsequently acetylated by an acetyltransferase leading to (2R)-annullatin G formation. The remaining enzymes identified within the cluster, anuD, anuI and anuJ, seem not to be involved in annullatin biosynthesis. The protein is Short-chain dehydrogenase anuD of Penicillium roqueforti (strain FM164).